A 237-amino-acid polypeptide reads, in one-letter code: ATP synthase subunit a (237 aa).

5 consecutive transmembrane segments (helical) span residues 17 to 37, 75 to 95, 112 to 132, 179 to 201, and 214 to 234; these read LSDM…AVAA, FLTL…LGLP, DATV…YYGV, ILLG…GAAI, and GTIQ…HKVS.

The protein belongs to the ATPase A chain family. In terms of assembly, F-type ATPases have 2 components, CF(1) - the catalytic core - and CF(0) - the membrane proton channel. CF(1) has five subunits: alpha(3), beta(3), gamma(1), delta(1), epsilon(1). CF(0) has three main subunits: a(1), b(2) and c(9-12). The alpha and beta chains form an alternating ring which encloses part of the gamma chain. CF(1) is attached to CF(0) by a central stalk formed by the gamma and epsilon chains, while a peripheral stalk is formed by the delta and b chains.

It localises to the cell membrane. Key component of the proton channel; it plays a direct role in the translocation of protons across the membrane. In Geobacillus kaustophilus (strain HTA426), this protein is ATP synthase subunit a.